Here is a 201-residue protein sequence, read N- to C-terminus: LexA repressor 1 (201 aa).

The H-T-H motif DNA-binding region spans 27-47; that stretch reads LAEIAQAFGFASRNAAQKHVQ. Residues Ser-122 and Lys-159 each act as for autocatalytic cleavage activity in the active site.

The protein belongs to the peptidase S24 family. As to quaternary structure, homodimer.

It catalyses the reaction Hydrolysis of Ala-|-Gly bond in repressor LexA.. Functionally, represses a number of genes involved in the response to DNA damage (SOS response), including recA and lexA. In the presence of single-stranded DNA, RecA interacts with LexA causing an autocatalytic cleavage which disrupts the DNA-binding part of LexA, leading to derepression of the SOS regulon and eventually DNA repair. This is LexA repressor 1 from Xanthomonas axonopodis pv. citri (strain 306).